Reading from the N-terminus, the 315-residue chain is Hydroxysteroid 11-beta-dehydrogenase 1-like protein (315 aa).

The signal sequence occupies residues 1–15 (MKVLLLTGLGALFFA). NADP(+)-binding positions include 36–62 (GANA…TAHT), 87–88 (DM), and 114–116 (NHI). Ser-165 lines the substrate pocket. Tyr-178 serves as the catalytic Proton acceptor. NADP(+) is bound by residues 178–182 (YSAAK) and 211–217 (GLRDRAS). The segment at 221–286 (AVRSSTSRPR…SKTEKNDGHL (66 aa)) is disordered. A compositionally biased stretch (basic and acidic residues) spans 277-286 (SKTEKNDGHL).

The protein belongs to the short-chain dehydrogenases/reductases (SDR) family. As to expression, highly expressed in the brain.

The protein localises to the secreted. It catalyses the reaction cortisone + NADPH + H(+) = cortisol + NADP(+). In terms of biological role, unidirectional NADP(+)-dependent cortisol dehydrogenase (in vitro). This is Hydroxysteroid 11-beta-dehydrogenase 1-like protein (HSD11B1L) from Homo sapiens (Human).